The primary structure comprises 166 residues: Interferon gamma (166 aa).

The first 23 residues, 1–23 (MKYTSYFLALLLCVLLGFSGSYG), serve as a signal peptide directing secretion. Gln24 carries the post-translational modification Pyrrolidone carboxylic acid. Asn39 and Asn106 each carry an N-linked (GlcNAc...) asparagine glycan.

This sequence belongs to the type II (or gamma) interferon family. In terms of assembly, homodimer. Interacts with IFNGR1 (via extracellular domain); this interaction promotes IFNGR1 dimerization. As to expression, released primarily from activated T lymphocytes.

Its subcellular location is the secreted. Functionally, type II interferon produced by immune cells such as T-cells and NK cells that plays crucial roles in antimicrobial, antiviral, and antitumor responses by activating effector immune cells and enhancing antigen presentation. Primarily signals through the JAK-STAT pathway after interaction with its receptor IFNGR1 to affect gene regulation. Upon IFNG binding, IFNGR1 intracellular domain opens out to allow association of downstream signaling components JAK2, JAK1 and STAT1, leading to STAT1 activation, nuclear translocation and transcription of IFNG-regulated genes. Many of the induced genes are transcription factors such as IRF1 that are able to further drive regulation of a next wave of transcription. Plays a role in class I antigen presentation pathway by inducing a replacement of catalytic proteasome subunits with immunoproteasome subunits. In turn, increases the quantity, quality, and repertoire of peptides for class I MHC loading. Increases the efficiency of peptide generation also by inducing the expression of activator PA28 that associates with the proteasome and alters its proteolytic cleavage preference. Up-regulates as well MHC II complexes on the cell surface by promoting expression of several key molecules such as cathepsins B/CTSB, H/CTSH, and L/CTSL. Participates in the regulation of hematopoietic stem cells during development and under homeostatic conditions by affecting their development, quiescence, and differentiation. This chain is Interferon gamma (IFNG), found in Bubalus carabanensis (Swamp type water buffalo).